A 310-amino-acid polypeptide reads, in one-letter code: Homeobox protein dsc-1 (310 aa).

A DNA-binding region (homeobox) is located at residues 180–239 (RRRFRTNFTELQSTFLEDSFKESHYPDHKAKKYMADFLKIPEDRITVWFQNRRAKWRRKE). The interval 262–310 (CFSAQHPDDGPNAKHPNSFGIPNQPMSLDQFPMNTEQDFPEFPSLQEHQ) is disordered. Positions 281-298 (GIPNQPMSLDQFPMNTEQ) are enriched in polar residues.

Expressed in the bilateral sensory neurons AWA, AWB, AWC, ASE, FLP and PVD. Also expressed in the enteric intestinal and anal depressor muscles.

It is found in the nucleus. It localises to the cell projection. The protein resides in the axon. The protein localises to the cytoplasm. Its function is as follows. Transcriptional regulator which plays a role in the expulsion step of defecation by controlling enteric muscle-specific expression of exp-1 which is required for enteric muscle contraction. Not required for exp-1 expression in the PDA neuron. Also involved in controlling the length of the defecation cycle. The sequence is that of Homeobox protein dsc-1 from Caenorhabditis elegans.